A 292-amino-acid chain; its full sequence is ATP phosphoribosyltransferase (292 aa).

This sequence belongs to the ATP phosphoribosyltransferase family. Long subfamily. Requires Mg(2+) as cofactor.

Its subcellular location is the cytoplasm. The enzyme catalyses 1-(5-phospho-beta-D-ribosyl)-ATP + diphosphate = 5-phospho-alpha-D-ribose 1-diphosphate + ATP. It participates in amino-acid biosynthesis; L-histidine biosynthesis; L-histidine from 5-phospho-alpha-D-ribose 1-diphosphate: step 1/9. With respect to regulation, feedback inhibited by histidine. Catalyzes the condensation of ATP and 5-phosphoribose 1-diphosphate to form N'-(5'-phosphoribosyl)-ATP (PR-ATP). Has a crucial role in the pathway because the rate of histidine biosynthesis seems to be controlled primarily by regulation of HisG enzymatic activity. This Desulfatibacillum aliphaticivorans protein is ATP phosphoribosyltransferase.